The sequence spans 449 residues: 4-aminobutyrate aminotransferase (449 aa).

Lys-294 is modified (N6-(pyridoxal phosphate)lysine).

This sequence belongs to the class-III pyridoxal-phosphate-dependent aminotransferase family. The cofactor is pyridoxal 5'-phosphate.

It catalyses the reaction 4-aminobutanoate + 2-oxoglutarate = succinate semialdehyde + L-glutamate. The enzyme catalyses (S)-3-amino-2-methylpropanoate + 2-oxoglutarate = 2-methyl-3-oxopropanoate + L-glutamate. Its pathway is amino-acid degradation; 4-aminobutanoate degradation. This Mycobacterium bovis (strain ATCC BAA-935 / AF2122/97) protein is 4-aminobutyrate aminotransferase (gabT).